The sequence spans 476 residues: NAC domain-containing protein 86 (476 aa).

One can recognise an NAC domain in the interval 6–157 (LPPGFRFHPT…AYALCRVFKK (152 aa)). A DNA-binding region spans residues 105-163 (IGTKKTLVYYRGRAPHGIRTGWVMHEYRLDESECEPSAFGMQDAYALCRVFKKIVIEAK).

Expressed in a few sieve element cells before enucleation and in phloem-pole pericycle cells.

It localises to the nucleus. Transcription factor directing sieve element enucleation and cytosol degradation. Not required for formation of lytic vacuoles. Regulates, with NAC045, the transcription of NEN1, NEN2, NEN3, NEN4, RTM1, RTM2, UBP16, PLDZETA, ABCB10 and At1g26450. The polypeptide is NAC domain-containing protein 86 (Arabidopsis thaliana (Mouse-ear cress)).